The chain runs to 843 residues: Probable cleavage and polyadenylation specificity factor subunit 2 (843 aa).

The segment covering Ala-414–Arg-425 has biased composition (basic and acidic residues). Disordered regions lie at residues Ala-414–Ala-443 and Asp-691–Lys-753. Residues Glu-432–Ile-441 show a composition bias toward acidic residues. The span at Ser-732–Thr-746 shows a compositional bias: basic and acidic residues.

This sequence belongs to the metallo-beta-lactamase superfamily. RNA-metabolizing metallo-beta-lactamase-like family. CPSF2/YSH1 subfamily. As to quaternary structure, CPSF is a heterotetramer composed of four distinct subunits 160, 100, 70 and 30 kDa.

It is found in the nucleus. CPSF plays a key role in pre-mRNA 3'-end formation, recognizing the AAUAAA signal sequence and interacting with poly(A)polymerase and other factors to bring about cleavage and poly(A) addition. The polypeptide is Probable cleavage and polyadenylation specificity factor subunit 2 (cpsf-2) (Caenorhabditis elegans).